Here is a 614-residue protein sequence, read N- to C-terminus: Threonine--tRNA ligase (614 aa).

Residues 1–138 (MRTLMIHSDY…HPLSELSRTI (138 aa)) form an editing domain region. Residues 133 to 157 (ELSRTITTEPEEESEDSEEEPSEPS) form a disordered region. The span at 141-154 (EPEEESEDSEEEPS) shows a compositional bias: acidic residues. The tract at residues 200–495 (PHVRLMREKE…TDKGNKPSLP (296 aa)) is catalytic. Positions 292, 344, and 466 each coordinate Zn(2+).

This sequence belongs to the class-II aminoacyl-tRNA synthetase family. In terms of assembly, homodimer. The cofactor is Zn(2+).

It localises to the cytoplasm. It catalyses the reaction tRNA(Thr) + L-threonine + ATP = L-threonyl-tRNA(Thr) + AMP + diphosphate + H(+). Catalyzes the attachment of threonine to tRNA(Thr) in a two-step reaction: L-threonine is first activated by ATP to form Thr-AMP and then transferred to the acceptor end of tRNA(Thr). Also edits incorrectly charged L-seryl-tRNA(Thr). This is Threonine--tRNA ligase from Methanosphaera stadtmanae (strain ATCC 43021 / DSM 3091 / JCM 11832 / MCB-3).